Here is a 358-residue protein sequence, read N- to C-terminus: Purine permease 2 (358 aa).

10 consecutive transmembrane segments (helical) span residues 6–26 (VLVI…PLMM), 37–57 (IWFP…PLLL), 74–94 (FFLM…LVGF), 110–130 (TASL…FFMV), 134–154 (FTPF…VLAL), 170–190 (VVGF…LPLV), 209–229 (FQMV…LAAG), 262–282 (VIVF…GLIF), 288–308 (VSGI…VICF), and 312–332 (FQAG…SYFY). The EamA domain occupies 46–154 (VGCPLIFFPL…LTGGAVVLAL (109 aa)).

Belongs to the purine permeases (TC 2.A.7.14) family. In terms of tissue distribution, expressed in the vascular system of leaves. Restricted to the phloem. Expressed in flowers and roots and not detected in stems.

Its subcellular location is the membrane. Its activity is regulated as follows. Competitive inhibition of adenine transport by isopentenyladenine, kinetin, benzylaminopurine, trans- and cis-zeatin and trans-zeatin riboside. In terms of biological role, mediates adenine transport. May be involved in the uptake of cytokinin analogs. The chain is Purine permease 2 (PUP2) from Arabidopsis thaliana (Mouse-ear cress).